A 453-amino-acid chain; its full sequence is Ribosomal protein uS12 methylthiotransferase RimO (453 aa).

An MTTase N-terminal domain is found at 4–120 (TSVHIVSLGC…IADHLRVLME (117 aa)). The [4Fe-4S] cluster site is built by Cys-13, Cys-49, Cys-83, Cys-161, Cys-165, and Cys-168. Residues 147–377 (STPPYSAYLK…MEEQAVISHE (231 aa)) form the Radical SAM core domain. Residues 380–450 (QTLVGSLQEV…DYDLFAEVIS (71 aa)) form the TRAM domain.

It belongs to the methylthiotransferase family. RimO subfamily. The cofactor is [4Fe-4S] cluster.

The protein localises to the cytoplasm. The enzyme catalyses L-aspartate(89)-[ribosomal protein uS12]-hydrogen + (sulfur carrier)-SH + AH2 + 2 S-adenosyl-L-methionine = 3-methylsulfanyl-L-aspartate(89)-[ribosomal protein uS12]-hydrogen + (sulfur carrier)-H + 5'-deoxyadenosine + L-methionine + A + S-adenosyl-L-homocysteine + 2 H(+). Its function is as follows. Catalyzes the methylthiolation of an aspartic acid residue of ribosomal protein uS12. The sequence is that of Ribosomal protein uS12 methylthiotransferase RimO from Syntrophus aciditrophicus (strain SB).